The following is a 205-amino-acid chain: Large ribosomal subunit protein uL4 (205 aa).

The interval 53–77 (RAAVRGGGRKPWKQKGTGRARAGSI) is disordered. Basic residues predominate over residues 59–70 (GGRKPWKQKGTG).

Belongs to the universal ribosomal protein uL4 family. Part of the 50S ribosomal subunit.

In terms of biological role, one of the primary rRNA binding proteins, this protein initially binds near the 5'-end of the 23S rRNA. It is important during the early stages of 50S assembly. It makes multiple contacts with different domains of the 23S rRNA in the assembled 50S subunit and ribosome. Forms part of the polypeptide exit tunnel. The polypeptide is Large ribosomal subunit protein uL4 (Acidithiobacillus ferrooxidans (strain ATCC 23270 / DSM 14882 / CIP 104768 / NCIMB 8455) (Ferrobacillus ferrooxidans (strain ATCC 23270))).